The following is a 441-amino-acid chain: Serine/threonine-protein kinase prk-2 (441 aa).

Residues 31-285 (YKLKAELGRG…LEAILNHPWV (255 aa)) form the Protein kinase domain. ATP contacts are provided by residues 37 to 45 (LGRGGFGVV) and Lys-60. Catalysis depends on Asp-158, which acts as the Proton acceptor. Positions 301-364 (QKKTSESSDD…NQKKPNHKEF (64 aa)) are disordered. The segment covering 303–320 (KTSESSDDHHSETLGDHS) has biased composition (basic and acidic residues). A compositionally biased stretch (polar residues) spans 328 to 338 (PPTSSVSQQPG).

The protein belongs to the protein kinase superfamily. Ser/Thr protein kinase family. PIM subfamily. Mg(2+) serves as cofactor.

The catalysed reaction is L-seryl-[protein] + ATP = O-phospho-L-seryl-[protein] + ADP + H(+). It carries out the reaction L-threonyl-[protein] + ATP = O-phospho-L-threonyl-[protein] + ADP + H(+). Involved in the negative regulation of synaptic differentiation in PLM neurons. This chain is Serine/threonine-protein kinase prk-2, found in Caenorhabditis elegans.